The sequence spans 216 residues: Fibroblast growth factor 19 (216 aa).

An N-terminal signal peptide occupies residues 1–24 (MRSGCVVVHVWILAGLWLAVAGRP). Cystine bridges form between cysteine 58-cysteine 70 and cysteine 102-cysteine 120.

It belongs to the heparin-binding growth factors family. In terms of assembly, interacts with FGFR1, FGFR2, FGFR3 and FGFR4. Affinity between fibroblast growth factors (FGFs) and their receptors is increased by KL, KLB and heparan sulfate glycosaminoglycans that function as coreceptors. Interacts with KL; this interaction is direct. Interacts with KLB; this interaction is direct. Interacts with FGFR4 in the presence of heparin, KL or KLB. Interacts with MALRD1. Expressed in fetal brain, cartilage, retina, and adult gall bladder.

The protein resides in the secreted. Its function is as follows. Involved in the suppression of bile acid biosynthesis through down-regulation of CYP7A1 expression, following positive regulation of the JNK and ERK1/2 cascades. Stimulates glucose uptake in adipocytes. Activity requires the presence of KLB and FGFR4. The polypeptide is Fibroblast growth factor 19 (FGF19) (Homo sapiens (Human)).